The primary structure comprises 127 residues: F420-non-reducing hydrogenase subunit G (127 aa).

Belongs to the [NiFe]/[NiFeSe] hydrogenase small subunit family. In terms of assembly, the F420-non-reducing hydrogenase is composed of three subunits; MvhA, MvhD and MvhG. It forms a complex with the heterodisulfide reductase (hdr).

Part of a complex that provides reducing equivalents for heterodisulfide reductase. The polypeptide is F420-non-reducing hydrogenase subunit G (mvhG) (Methanothermus fervidus).